Reading from the N-terminus, the 385-residue chain is MKLHEHQAKEIFAKYGIPVPEGKVAFSLKEAKEVAEELGEFPLVVKAQIHCGGRGKAGGVKIVKDMDELEKAVESLLGKVLKTFQCPDGKPVNRVLIEKATNIDKEYYLAITLDRSKSKPVIMASAAGGMEIEEIVKENPEAIIIETIDPELGLMPYQARELAFKLNLPVKEFASIALKLYQIYSDLDASLVEINPLVLTKEGNLIALDAKLDIDDNALFRHKDLEEMEDETQLPQLEVEAKKYGLNYIKLNGNIGCMVNGAGLAMATMDIIKLAGGEPANFLDVGGGANVEQIANAFRILMADPDVKAVFINIFGGILRVDRLAQGLIEASKMVELRVPIVARLEGTNVEEGKRMLQESGLNFIIAEDMWDGAKKAVEIANKQS.

The 232-residue stretch at 9–240 folds into the ATP-grasp domain; that stretch reads KEIFAKYGIP…ETQLPQLEVE (232 aa). Residues Lys46, 53–55, Glu98, Thr101, and Glu106 each bind ATP; that span reads GRG. Positions 195 and 209 each coordinate Mg(2+). Substrate contacts are provided by residues Asn260 and 317–319; that span reads GIL.

This sequence belongs to the succinate/malate CoA ligase beta subunit family. As to quaternary structure, heterotetramer of two alpha and two beta subunits. Mg(2+) serves as cofactor.

It carries out the reaction succinate + ATP + CoA = succinyl-CoA + ADP + phosphate. The catalysed reaction is GTP + succinate + CoA = succinyl-CoA + GDP + phosphate. The protein operates within carbohydrate metabolism; tricarboxylic acid cycle; succinate from succinyl-CoA (ligase route): step 1/1. Succinyl-CoA synthetase functions in the citric acid cycle (TCA), coupling the hydrolysis of succinyl-CoA to the synthesis of either ATP or GTP and thus represents the only step of substrate-level phosphorylation in the TCA. The beta subunit provides nucleotide specificity of the enzyme and binds the substrate succinate, while the binding sites for coenzyme A and phosphate are found in the alpha subunit. The sequence is that of Succinate--CoA ligase [ADP-forming] subunit beta from Aquifex aeolicus (strain VF5).